Consider the following 596-residue polypeptide: DNA mismatch repair protein MutL (596 aa).

This sequence belongs to the DNA mismatch repair MutL/HexB family.

In terms of biological role, this protein is involved in the repair of mismatches in DNA. It is required for dam-dependent methyl-directed DNA mismatch repair. May act as a 'molecular matchmaker', a protein that promotes the formation of a stable complex between two or more DNA-binding proteins in an ATP-dependent manner without itself being part of a final effector complex. This chain is DNA mismatch repair protein MutL, found in Leptospira borgpetersenii serovar Hardjo-bovis (strain L550).